Reading from the N-terminus, the 83-residue chain is Small ribosomal subunit protein bS16 (83 aa).

It belongs to the bacterial ribosomal protein bS16 family.

The chain is Small ribosomal subunit protein bS16 from Borrelia turicatae (strain 91E135).